The sequence spans 232 residues: V-type ATP synthase subunit E (232 aa).

It belongs to the V-ATPase E subunit family.

Produces ATP from ADP in the presence of a proton gradient across the membrane. This chain is V-type ATP synthase subunit E (atpE), found in Treponema pallidum (strain Nichols).